A 553-amino-acid chain; its full sequence is Glycine betaine/proline/choline transporter VP1723 (553 aa).

A run of 12 helical transmembrane segments spans residues 43–63 (NRVF…TLTF), 85–105 (FFLA…VTPL), 122–142 (AGWL…FFGV), 191–211 (WALH…IFSF), 231–251 (VWGW…VFGL), 278–298 (TQVV…VAGL), 310–330 (MILA…MAIL), 362–382 (WTAF…MFIA), 393–413 (FIIC…TAFG), 443–463 (VMPF…VFFI), 490–510 (VFWC…GGLA), and 515–535 (MAVT…VSLI).

Belongs to the BCCT transporter (TC 2.A.15) family.

Its subcellular location is the cell inner membrane. Its function is as follows. Involved in the uptake of osmoprotectants. Can transport glycine betaine, proline and choline. In Vibrio parahaemolyticus serotype O3:K6 (strain RIMD 2210633), this protein is Glycine betaine/proline/choline transporter VP1723.